Reading from the N-terminus, the 173-residue chain is MNDLRYPIGQFTYKRPITEEMIDTWIQEIEDLPNELTKAIKDLDQKQLDTPYRVGGWTVRQVVHHVVDSHMNSYIRFKLALTEKNPTIKPYKEEKWAELPDSKLPVDVSLVMLESLHKRWVNLLYSLELEDLEKTFNHPETGETKLAAAIGLYAWHGRHHTAHITSLRKRLNW.

Positions 65, 156, and 160 each coordinate Zn(2+).

It belongs to the metal hydrolase YfiT family. As to quaternary structure, homodimer. Zn(2+) serves as cofactor.

It is found in the cytoplasm. Its function is as follows. Possible metal-dependent hydrolase. The protein is Putative metal-dependent hydrolase BT9727_2476 of Bacillus thuringiensis subsp. konkukian (strain 97-27).